Here is a 439-residue protein sequence, read N- to C-terminus: MEVTAKLIDFANANATVKIAQGAIKAEVEKLAKKASKTMKMDGFRAGKVPVAAILKRYEKELTRDAEQDLLRNAVDGALKEVKKDAKDLVGEPYFEKFDRKDGAIEAQMVLSFRPEVKLDGYEELVPTYNTPKVTQKEIDAKKEELLKRFATPEAIKEDRALKEGDFAKFDFEGFVDGKAFDGGKAQNYVLEIGSKQFIPGFEEGMIGLKIGEEKDINVTFPKEYGATHLAGKDAVFKVKLHEIQELKLPELNEELLKSLLPEEKEPSVEKLEAKLKEQLKNEKIFKLINDELKNQFAEALVAKFDFVLPKNIVEQETDMQFRSSLRNLSEEELKEFKDEAKYKEKRESFKEDAQKSVKLTFIIDELAKLRNVTVSDQELIQAIYFEAYRYGFNPQEHLDNYKKQGALPAIKMSLIEEKLFADIFKKNDKKKTEKESEK.

Positions 165-250 (GDFAKFDFEG…LHEIQELKLP (86 aa)) constitute a PPIase FKBP-type domain.

It belongs to the FKBP-type PPIase family. Tig subfamily.

Its subcellular location is the cytoplasm. The enzyme catalyses [protein]-peptidylproline (omega=180) = [protein]-peptidylproline (omega=0). Its function is as follows. Involved in protein export. Acts as a chaperone by maintaining the newly synthesized protein in an open conformation. Functions as a peptidyl-prolyl cis-trans isomerase. In Campylobacter lari (strain RM2100 / D67 / ATCC BAA-1060), this protein is Trigger factor.